Reading from the N-terminus, the 261-residue chain is Indole-3-glycerol phosphate synthase (261 aa).

The protein belongs to the TrpC family.

The enzyme catalyses 1-(2-carboxyphenylamino)-1-deoxy-D-ribulose 5-phosphate + H(+) = (1S,2R)-1-C-(indol-3-yl)glycerol 3-phosphate + CO2 + H2O. Its pathway is amino-acid biosynthesis; L-tryptophan biosynthesis; L-tryptophan from chorismate: step 4/5. The chain is Indole-3-glycerol phosphate synthase from Paraburkholderia phymatum (strain DSM 17167 / CIP 108236 / LMG 21445 / STM815) (Burkholderia phymatum).